The following is a 582-amino-acid chain: Potassium-transporting ATPase potassium-binding subunit (582 aa).

Transmembrane regions (helical) follow at residues alanine 11 to valine 31, leucine 81 to phenylalanine 101, phenylalanine 148 to phenylalanine 168, leucine 195 to isoleucine 215, valine 272 to valine 292, glycine 298 to valine 318, alanine 379 to glycine 399, glycine 401 to glycine 421, valine 439 to valine 459, and glycine 551 to phenylalanine 571.

This sequence belongs to the KdpA family. The system is composed of three essential subunits: KdpA, KdpB and KdpC.

The protein resides in the cell membrane. Its function is as follows. Part of the high-affinity ATP-driven potassium transport (or Kdp) system, which catalyzes the hydrolysis of ATP coupled with the electrogenic transport of potassium into the cytoplasm. This subunit binds the extracellular potassium ions and delivers the ions to the membrane domain of KdpB through an intramembrane tunnel. The chain is Potassium-transporting ATPase potassium-binding subunit from Halobacterium salinarum (strain ATCC 700922 / JCM 11081 / NRC-1) (Halobacterium halobium).